The primary structure comprises 133 residues: Salivary cystatin-L2 (133 aa).

The signal sequence occupies residues 1–18 (MTSSLALVLLLGGAAVCA). Residues 34–118 (DDPKYLELAH…RTCTAVIYEN (85 aa)) enclose the Cystatin domain.

It belongs to the cystatin family. As to expression, salivary gland, midgut and other tissues.

Its subcellular location is the secreted. Functionally, inhibitor of cysteine proteinases. Inhibits host cathepsin L (CTSL) and S (CTSS). Modulates production of various cytokines and chemokines in lipopolysaccharide (LPS)-stimulated mouse dendritic cell. Suppresses maturation of mouse bone-marrow-derived dendritic cells (BMDCs). Its function is as follows. (Microbial infection) Modulates Borrelia miyamotoi-stimulated immune responses in mice by suppressing activities of host dendritic and T-cells. This chain is Salivary cystatin-L2, found in Ixodes persulcatus (Taiga tick).